The chain runs to 439 residues: Tol-Pal system protein TolB (439 aa).

An N-terminal signal peptide occupies residues 1–22 (MKKPLRWLAALTVLLLPLSALA).

It belongs to the TolB family. In terms of assembly, the Tol-Pal system is composed of five core proteins: the inner membrane proteins TolA, TolQ and TolR, the periplasmic protein TolB and the outer membrane protein Pal. They form a network linking the inner and outer membranes and the peptidoglycan layer.

The protein resides in the periplasm. Functionally, part of the Tol-Pal system, which plays a role in outer membrane invagination during cell division and is important for maintaining outer membrane integrity. This chain is Tol-Pal system protein TolB, found in Xanthomonas oryzae pv. oryzae (strain MAFF 311018).